Reading from the N-terminus, the 337-residue chain is Zinc finger protein Gfi-1b (337 aa).

Positions M1 to F20 are mediates repression of transcription. The interval M1–F20 is SNAG domain. 6 consecutive C2H2-type zinc fingers follow at residues Y170–H193, F199–H221, F227–H249, Y255–H277, H283–H305, and F311–H334.

Expressed in erythroid cells of primitive and definitive lineage and bone marrow cells.

It is found in the nucleus. Functionally, essential transcriptional regulator necessary for development and differentiation of erythroid and megakaryocytic lineages. Alters histone methylation by recruiting histone methyltransferase to target genes promoters. Plays a role in heterochromatin formation. The protein is Zinc finger protein Gfi-1b (GFI1B) of Gallus gallus (Chicken).